We begin with the raw amino-acid sequence, 488 residues long: 3-octaprenyl-4-hydroxybenzoate carboxy-lyase (488 aa).

Asn-172 provides a ligand contact to Mn(2+). Residues 175–177 (IYR), 189–191 (RWL), and 194–195 (RG) each bind prenylated FMN. Position 238 (Glu-238) interacts with Mn(2+). The active-site Proton donor is Asp-287.

It belongs to the UbiD family. As to quaternary structure, homohexamer. It depends on prenylated FMN as a cofactor. Mn(2+) is required as a cofactor.

It is found in the cell membrane. It catalyses the reaction a 4-hydroxy-3-(all-trans-polyprenyl)benzoate + H(+) = a 2-(all-trans-polyprenyl)phenol + CO2. It functions in the pathway cofactor biosynthesis; ubiquinone biosynthesis. Catalyzes the decarboxylation of 3-octaprenyl-4-hydroxy benzoate to 2-octaprenylphenol, an intermediate step in ubiquinone biosynthesis. This chain is 3-octaprenyl-4-hydroxybenzoate carboxy-lyase, found in Pseudomonas paraeruginosa (strain DSM 24068 / PA7) (Pseudomonas aeruginosa (strain PA7)).